The chain runs to 80 residues: Putative membrane protein insertion efficiency factor (80 aa).

The protein belongs to the UPF0161 family.

The protein resides in the cell membrane. Its function is as follows. Could be involved in insertion of integral membrane proteins into the membrane. This Limosilactobacillus fermentum (strain NBRC 3956 / LMG 18251) (Lactobacillus fermentum) protein is Putative membrane protein insertion efficiency factor.